A 221-amino-acid chain; its full sequence is Histone H1C (221 aa).

2 disordered regions span residues 1–43 and 113–221; these read MSDP…PPVS and AAKK…AKKA. Residues 38–112 enclose the H15 domain; the sequence is THPPVSEMVF…GALGSFKLPA (75 aa). Composition is skewed to basic residues over residues 141–167 and 175–221; these read KVKKTIAKKPKAATATKIKKPVAKTTK and AAKK…AKKA.

The protein belongs to the histone H1/H5 family.

The protein localises to the nucleus. It is found in the chromosome. Its function is as follows. Histones H1 are necessary for the condensation of nucleosome chains into higher-order structures. The chain is Histone H1C from Chironomus tentans (Midge).